Here is a 1217-residue protein sequence, read N- to C-terminus: ATP-dependent helicase/nuclease subunit A (1217 aa).

One can recognise a UvrD-like helicase ATP-binding domain in the interval 10–475 (VIWTDAQWQS…MDLSQNFRSR (466 aa)). 31–38 (AAAGSGKT) lines the ATP pocket. Residues 491 to 786 (DEQVGEVNYD…RMMTIHSSKG (296 aa)) form the UvrD-like helicase C-terminal domain.

The protein belongs to the helicase family. AddA subfamily. Heterodimer of AddA and AddB/RexB. Requires Mg(2+) as cofactor.

The enzyme catalyses Couples ATP hydrolysis with the unwinding of duplex DNA by translocating in the 3'-5' direction.. It carries out the reaction ATP + H2O = ADP + phosphate + H(+). In terms of biological role, the heterodimer acts as both an ATP-dependent DNA helicase and an ATP-dependent, dual-direction single-stranded exonuclease. Recognizes the chi site generating a DNA molecule suitable for the initiation of homologous recombination. The AddA nuclease domain is required for chi fragment generation; this subunit has the helicase and 3' -&gt; 5' nuclease activities. This is ATP-dependent helicase/nuclease subunit A from Staphylococcus aureus (strain bovine RF122 / ET3-1).